The chain runs to 384 residues: Substance-K receptor (384 aa).

Over 1–32 the chain is Extracellular; sequence MGGRAIVTDTNIFSGLESNTTGVTAFSMPAWQ. N-linked (GlcNAc...) asparagine glycosylation occurs at N19. The helical transmembrane segment at 33-56 threads the bilayer; the sequence is LALWATAYLGLVLVAVTGNATVIW. Topologically, residues 57-69 are cytoplasmic; that stretch reads IILAHERMRTVTN. Residues 70–90 traverse the membrane as a helical segment; the sequence is YFIINLALADLCMAAFNATFN. Residues 91-107 lie on the Extracellular side of the membrane; sequence FVYASHNIWYFGRAFCY. An intrachain disulfide couples C106 to C181. Residues 108 to 129 traverse the membrane as a helical segment; that stretch reads FQNLFPITAMFVSIYSMTAIAA. Residues 130-149 are Cytoplasmic-facing; that stretch reads DRYMAIVHPFQPRLSAPITK. Residues 150 to 170 traverse the membrane as a helical segment; it reads ATIAGIWLVALALASPQCFYS. Over 171 to 196 the chain is Extracellular; sequence TITVDQGATKCVVAWPNDNGGKMLLL. Residues 197–218 form a helical membrane-spanning segment; the sequence is YHLVVFVLVYFLPLVVMFVAYS. Over 219–251 the chain is Cytoplasmic; that stretch reads VIGLTLWKRAVPRHQAHGANLRHLHAKKKFVKA. A helical transmembrane segment spans residues 252 to 272; sequence MVLVVLTFAICWLPYHLYFIL. The Extracellular portion of the chain corresponds to 273–290; the sequence is GSFQKDIYYRKFIQQVYL. Residues 291–310 form a helical membrane-spanning segment; sequence ALFWLAMSSTMYNPIIYCCL. The Cytoplasmic portion of the chain corresponds to 311 to 384; sequence NHRFRSGFRL…SPQDVEPAAP (74 aa). A lipid anchor (S-palmitoyl cysteine) is attached at C324.

The protein belongs to the G-protein coupled receptor 1 family.

The protein resides in the cell membrane. Functionally, this is a receptor for the tachykinin neuropeptide substance K (neurokinin A). It is associated with G proteins that activate a phosphatidylinositol-calcium second messenger system. The rank order of affinity of this receptor to tachykinins is: substance K &gt; neuromedin-K &gt; substance P. This chain is Substance-K receptor (TACR2), found in Mesocricetus auratus (Golden hamster).